A 190-amino-acid chain; its full sequence is UPF0200 protein MTH_434 (190 aa).

10–17 (GMPGAGKG) is a binding site for ATP.

This sequence belongs to the UPF0200 family.

This is UPF0200 protein MTH_434 from Methanothermobacter thermautotrophicus (strain ATCC 29096 / DSM 1053 / JCM 10044 / NBRC 100330 / Delta H) (Methanobacterium thermoautotrophicum).